A 460-amino-acid chain; its full sequence is Probable glucan endo-1,3-beta-glucosidase eglC (460 aa).

A signal peptide spans 1–18; that stretch reads MQLAQLAAFAMTLATSEA. Glutamate 128 (proton donor) is an active-site residue. Asparagine 183 is a glycosylation site (N-linked (GlcNAc...) asparagine). The active-site Nucleophile is the glutamate 239. N-linked (GlcNAc...) asparagine glycans are attached at residues asparagine 312, asparagine 367, and asparagine 373. Positions 379–437 are disordered; that stretch reads RPSGSASARPSAGAISSGSGSSSSGSGSSGSTGTSATSGQSSSSGSSAAAGSSSPAAFS. The span at 380–437 shows a compositional bias: low complexity; the sequence is PSGSASARPSAGAISSGSGSSSSGSGSSGSTGTSATSGQSSSSGSSAAAGSSSPAAFS. Serine 430 is lipidated: GPI-anchor amidated serine. Positions 431 to 460 are cleaved as a propeptide — removed in mature form; the sequence is SSPAAFSGASTLSGSLFGAVVAVFMTLAAL.

This sequence belongs to the glycosyl hydrolase 17 family. In terms of processing, the GPI-anchor is attached to the protein in the endoplasmic reticulum and serves to target the protein to the cell surface. There, the glucosamine-inositol phospholipid moiety is cleaved off and the GPI-modified mannoprotein is covalently attached via its lipidless GPI glycan remnant to the 1,6-beta-glucan of the outer cell wall layer.

The protein resides in the cell membrane. It localises to the secreted. It is found in the cell wall. It catalyses the reaction Hydrolysis of (1-&gt;3)-beta-D-glucosidic linkages in (1-&gt;3)-beta-D-glucans.. Its function is as follows. Glucanases play a role in cell expansion during growth, in cell-cell fusion during mating, and in spore release during sporulation. This enzyme may be involved in beta-glucan degradation and also function biosynthetically as a transglycosylase. This is Probable glucan endo-1,3-beta-glucosidase eglC (eglC) from Aspergillus niger (strain ATCC MYA-4892 / CBS 513.88 / FGSC A1513).